Consider the following 341-residue polypeptide: Dye-decolorizing peroxidase (341 aa).

The active-site Proton acceptor is Asp148. Position 221 (His221) interacts with heme. Residues 304-341 (FLDDPPDAPTRLVPEATFTAPISDGSLGIGSLKRSAQQ) form a targeting peptide region.

The protein belongs to the DyP-type peroxidase family. As to quaternary structure, homohexamer. Requires heme b as cofactor.

The protein localises to the encapsulin nanocompartment. Its function is as follows. Cargo protein of a type 1 encapsulin nanocompartment. Has both general peroxidase activity and dye-decolorizing activity. Can catalyze the oxidation of both protoporphyrinogen IX and coproporphyrinogen III to their corresponding porphyrins. Also efficiently decolorizes the dyes alizarin red and Cibacron blue F3GA. This cargo-loaded encapsulin nanocompartment is probably involved in protection against oxidative damage. The sequence is that of Dye-decolorizing peroxidase from Rhodococcus erythropolis (strain PR4 / NBRC 100887).